Reading from the N-terminus, the 85-residue chain is UPF0386 protein RHE_CH01859 (85 aa).

The protein belongs to the UPF0386 family.

In Rhizobium etli (strain ATCC 51251 / DSM 11541 / JCM 21823 / NBRC 15573 / CFN 42), this protein is UPF0386 protein RHE_CH01859.